We begin with the raw amino-acid sequence, 342 residues long: Phomopsin biosynthesis cluster protein B (342 aa).

A disordered region spans residues 1 to 22 (MESIAKAKSLPNKGRTYDSQRP). The helical transmembrane segment at 87–107 (VLIIGCAVISLFAIIGALGFA) threads the bilayer. Residues 118 to 186 (CASPAHQNPH…QCGESPDEAQ (69 aa)) form a disordered region. Residues 144–155 (HSGSHSSSSSTN) are compositionally biased toward low complexity. N-linked (GlcNAc...) asparagine glycosylation is present at N248.

Its subcellular location is the membrane. In terms of biological role, part of the gene cluster that mediates the biosynthesis of the phomopsins, a group of hexapeptide mycotoxins which infects lupins and causes lupinosis disease in livestock. The role of phomB within the phomopsins biosynthesis pathway has still to be determined. The pathway starts with the processing of the precursor phomA by several endopeptidases including kexin proteases as well as the cluster-specific S41 family peptidase phomP1 and the oligopeptidase phomG to produce 10 identical copies of the hexapeptide Tyr-Val-Ile-Pro-Ile-Asp. After being excised from the precursor peptide, the core peptides are cyclized and modified post-translationally by enzymes encoded within the gene cluster. The timing and order of proteolysis of the phomA precursor and PTMs are still unknown. Two tyrosinase-like enzymes, phomQ1 and phomQ2, catalyze the chlorination and hydroxylation of Tyr, respectively. PhomYb, is proposed to be involved in the construction of the macrocyclic structure. The other 4 ustYa family proteins may be involved in PTMs that generate the unique structure of phomopsin A. PhomYa is required for the hydroxylation of C-beta of Tyr. PhomYc, phomYd, and phomYe are responsible for the biosynthesis of 2,3-dehydroisoleucine (dIle), 2,3-dehydroaspartic acid (dAsp), and 3,4-dehydroproline (dPro), respectively. While dIle formation by phomYc is indispensable for the installation of dAsp by phomYd, the order of the other PTMs have not been elucidated yet. Most of the biosynthetic enzymes likely have broad substrate specificity, and thus, there might be a metabolic grid from a precursor to phomopsin A. The enzyme(s) responsible for the biosynthesis of 3,4-dehydrovaline (dVal) have also not been identified yet. Finally, phomM acts as an S-adenosylmethionine-dependent alpha-N-methyltransferase that catalyzes two successive N-methylation reactions, converting N-desmethyl-phomopsin A to phomopsin A and phomopsin A further to an N,N-dimethylated congener called phomopsin E. The polypeptide is Phomopsin biosynthesis cluster protein B (Diaporthe leptostromiformis (Lupinosis disease fungus)).